Consider the following 887-residue polypeptide: Alanine--tRNA ligase (887 aa).

Zn(2+) is bound by residues His565, His569, Cys674, and His678.

Belongs to the class-II aminoacyl-tRNA synthetase family. Zn(2+) is required as a cofactor.

It localises to the cytoplasm. The enzyme catalyses tRNA(Ala) + L-alanine + ATP = L-alanyl-tRNA(Ala) + AMP + diphosphate. Catalyzes the attachment of alanine to tRNA(Ala) in a two-step reaction: alanine is first activated by ATP to form Ala-AMP and then transferred to the acceptor end of tRNA(Ala). Also edits incorrectly charged Ser-tRNA(Ala) and Gly-tRNA(Ala) via its editing domain. The sequence is that of Alanine--tRNA ligase from Erythrobacter litoralis (strain HTCC2594).